Reading from the N-terminus, the 132-residue chain is Small ribosomal subunit protein uS8 (132 aa).

The protein belongs to the universal ribosomal protein uS8 family. As to quaternary structure, part of the 30S ribosomal subunit. Contacts proteins S5 and S12.

One of the primary rRNA binding proteins, it binds directly to 16S rRNA central domain where it helps coordinate assembly of the platform of the 30S subunit. This Acidobacterium capsulatum (strain ATCC 51196 / DSM 11244 / BCRC 80197 / JCM 7670 / NBRC 15755 / NCIMB 13165 / 161) protein is Small ribosomal subunit protein uS8.